Here is a 219-residue protein sequence, read N- to C-terminus: Biofilm-associated metzincin protease inhibitor (219 aa).

The chain crosses the membrane as a helical span at residues threonine 4 to leucine 24. A compositionally biased stretch (basic and acidic residues) spans aspartate 191–aspartate 204. Positions aspartate 191–glycine 219 are disordered. Over residues glutamate 209–glycine 219 the composition is skewed to pro residues.

The protein resides in the cell membrane. Functionally, inhibitor of the metalloendopeptidase Mep72. Forms a protein-protein complex with the protease, which is the product of its coregulated adjacent gene, and probably prevents premature protease activity until the protein has been secreted. This chain is Biofilm-associated metzincin protease inhibitor, found in Pseudomonas aeruginosa (strain ATCC 15692 / DSM 22644 / CIP 104116 / JCM 14847 / LMG 12228 / 1C / PRS 101 / PAO1).